A 60-amino-acid chain; its full sequence is MAVPKKKTSKSRRDMRRSHHALKGSAYGECPNCGELKRPHHVCGSCGHYDGREVVQNASA.

The span at 1-22 shows a compositional bias: basic residues; sequence MAVPKKKTSKSRRDMRRSHHAL. The tract at residues 1 to 27 is disordered; it reads MAVPKKKTSKSRRDMRRSHHALKGSAY.

The protein belongs to the bacterial ribosomal protein bL32 family.

This is Large ribosomal subunit protein bL32 from Rhodospirillum centenum (strain ATCC 51521 / SW).